Consider the following 516-residue polypeptide: Polyprenol-phosphate-mannose--protein mannosyltransferase (516 aa).

9 helical membrane-spanning segments follow: residues 113 to 133 (YNGLGWRFSGAVCGVIIVMLV), 143 to 163 (STLVGAIAGLLIIADGVSFVS), 166 to 186 (TALLDVFLVMFAVAAFACLMV), 234 to 254 (WSGLYFVLFFGVMTLVFDAIA), 275 to 295 (AAYVFGLIPFAVYLASYAPWF), 384 to 404 (VMLVGTPAMWFIAVPVLGWAL), 413 to 433 (WRYGAVLVGYMAGFLPWFADI), 437 to 457 (MYFFYATVMAPFLVLAIALIL), and 473 to 493 (LGLLTVCFYVALVITNFAWMY).

It belongs to the glycosyltransferase 39 family.

The protein resides in the cell membrane. It participates in protein modification; protein glycosylation. In terms of biological role, protein O-mannosyltransferase that catalyzes the transfer of a single mannose residue from a polyprenol phospho-mannosyl lipidic donor to the hydroxyl group of selected serine and threonine residues in acceptor proteins. The protein is Polyprenol-phosphate-mannose--protein mannosyltransferase of Mycolicibacterium smegmatis (strain ATCC 700084 / mc(2)155) (Mycobacterium smegmatis).